We begin with the raw amino-acid sequence, 367 residues long: Chorismate synthase (367 aa).

A disordered region spans residues 41 to 60 (FTHDLQRRASGKSRHTSARR). NADP(+) contacts are provided by Arg-48 and Arg-54. FMN is bound by residues 125–127 (RSS), 238–239 (NA), Gly-278, 293–297 (KPTSS), and Arg-319.

It belongs to the chorismate synthase family. As to quaternary structure, homotetramer. FMNH2 serves as cofactor.

It carries out the reaction 5-O-(1-carboxyvinyl)-3-phosphoshikimate = chorismate + phosphate. It functions in the pathway metabolic intermediate biosynthesis; chorismate biosynthesis; chorismate from D-erythrose 4-phosphate and phosphoenolpyruvate: step 7/7. Its function is as follows. Catalyzes the anti-1,4-elimination of the C-3 phosphate and the C-6 proR hydrogen from 5-enolpyruvylshikimate-3-phosphate (EPSP) to yield chorismate, which is the branch point compound that serves as the starting substrate for the three terminal pathways of aromatic amino acid biosynthesis. This reaction introduces a second double bond into the aromatic ring system. This chain is Chorismate synthase, found in Xanthomonas axonopodis pv. citri (strain 306).